The primary structure comprises 136 residues: Heme-binding protein Rv0203 (136 aa).

A signal peptide spans 1 to 27 (MKTGTATTRRRLLAVLIALALPGAAVA). C41 and C115 are oxidised to a cystine. Y60, H64, and H90 together coordinate heme.

Dimer of dimers.

It localises to the secreted. Part of a heme-iron acquisition system. Acts by binding heme and delivering it to the membrane proteins MmpL3 and MmpL11. Can use free heme or heme from host hemoglobin. This is Heme-binding protein Rv0203 from Mycobacterium tuberculosis (strain ATCC 25618 / H37Rv).